The primary structure comprises 584 residues: Inactive metallocarboxypeptidase ECM14 (584 aa).

The N-terminal stretch at 1–20 is a signal peptide; it reads MHLLPVITAVALIYTPLASA. A propeptide spanning residues 21–174 is cleaved from the precursor; the sequence is VPSSSNPQFP…QAVYESYPQP (154 aa). The 323-residue stretch at 202 to 524 folds into the Peptidase M14 domain; the sequence is DYQPLSVMTP…NAVLEFGKFL (323 aa). Residues histidine 267 and glutamate 270 each coordinate Zn(2+). Substrate is bound by residues 267–270, arginine 325, and 342–343; these read HARE and DR. Cysteine 336 and cysteine 359 are disulfide-bonded. Asparagine 383 and asparagine 389 each carry an N-linked (GlcNAc...) asparagine glycan. Histidine 399 contacts Zn(2+). Residue 400–401 coordinates substrate; it reads SY. The interval 564–584 is disordered; sequence QQLDDEDGEADSHWVLRTQRS.

This sequence belongs to the peptidase M14 family. Zn(2+) serves as cofactor.

Its subcellular location is the vacuole. The protein localises to the secreted. Functionally, inactive carboxypeptidase that may play a role in cell wall organization and biogenesis. In Uncinocarpus reesii (strain UAMH 1704), this protein is Inactive metallocarboxypeptidase ECM14 (ECM14).